The primary structure comprises 116 residues: Endocuticle structural glycoprotein SgAbd-4 (116 aa).

Pyrrolidone carboxylic acid is present on Gln1. Residues Asp20–Pro92 enclose the Chitin-binding type R&amp;R domain. Residues Thr90 and Thr107 are each glycosylated (O-linked (HexNAc...) threonine). Residue Ser110 is glycosylated (O-linked (HexNAc...) serine). Thr111 is a glycosylation site (O-linked (HexNAc...) threonine). Pro116 carries the proline amide modification.

Functionally, component of the abdominal endocuticle. The sequence is that of Endocuticle structural glycoprotein SgAbd-4 from Schistocerca gregaria (Desert locust).